A 60-amino-acid chain; its full sequence is Large ribosomal subunit protein bL32 (60 aa).

This sequence belongs to the bacterial ribosomal protein bL32 family.

The chain is Large ribosomal subunit protein bL32 from Borreliella afzelii (strain PKo) (Borrelia afzelii).